Here is a 1173-residue protein sequence, read N- to C-terminus: Clustered mitochondria protein homolog (1173 aa).

Residues 1–21 (MSTIDLPTSSLPGSSGDPSGT) show a composition bias toward low complexity. The disordered stretch occupies residues 1-25 (MSTIDLPTSSLPGSSGDPSGTEMSH). Positions 316–565 (VPHRADLSRT…SLFPLDAQFL (250 aa)) constitute a Clu domain. A disordered region spans residues 888–910 (KFTGKKGNKKKRNLGKSQNTTNR). A compositionally biased stretch (basic residues) spans 890-901 (TGKKGNKKKRNL). The stretch at 984-1017 (ARAYCQLAMIYHQLEKKEEAVELARKAVIVCERF) is one TPR repeat.

It belongs to the CLU family. May associate with the eukaryotic translation initiation factor 3 (eIF-3) complex.

The protein localises to the cytoplasm. Its function is as follows. mRNA-binding protein involved in proper cytoplasmic distribution of mitochondria. The polypeptide is Clustered mitochondria protein homolog (Schizosaccharomyces pombe (strain 972 / ATCC 24843) (Fission yeast)).